Consider the following 79-residue polypeptide: DNA gyrase inhibitor YacG (79 aa).

Zn(2+) is bound by residues C7, C10, C26, and C30.

It belongs to the DNA gyrase inhibitor YacG family. Interacts with GyrB. Zn(2+) serves as cofactor.

Functionally, inhibits all the catalytic activities of DNA gyrase by preventing its interaction with DNA. Acts by binding directly to the C-terminal domain of GyrB, which probably disrupts DNA binding by the gyrase. The chain is DNA gyrase inhibitor YacG from Shewanella pealeana (strain ATCC 700345 / ANG-SQ1).